Reading from the N-terminus, the 391-residue chain is Phosphoprotein (391 aa).

Phosphothreonine is present on residues Thr10, Thr16, and Thr39. Ser69 is subject to Phosphoserine. 2 disordered regions span residues 82-101 and 143-208; these read SSSE…FAQT and PRTS…PANV. 3 positions are modified to phosphothreonine: Thr91, Thr150, and Thr165. Position 188 is a phosphoserine (Ser188). Polar residues predominate over residues 198-208; that stretch reads LPQQDSTPANV. The stretch at 218 to 245 forms a coiled coil; the sequence is ANEIMDLLRGMDARLQHLEQKVDKVLAQ. Thr250 is modified (phosphothreonine). Residue Ser257 is modified to Phosphoserine. Residues Thr258 and Thr282 each carry the phosphothreonine modification. 2 positions are modified to phosphoserine: Ser292 and Ser294. A Phosphothreonine modification is found at Thr298. Phosphoserine is present on residues Ser301 and Ser374. Residues 343-391 are interaction with the nucleoprotein; that stretch reads AGRKVMITKMITDCVANPQMKQAFEQRLAKASTEDALNDIKRDIIRSAI. Positions 348-391 are x domain (XD); the sequence is MITKMITDCVANPQMKQAFEQRLAKASTEDALNDIKRDIIRSAI. Thr375 carries the phosphothreonine modification.

This sequence belongs to the rubulavirus/avulavirus P protein family. Homotetramer. Interacts (via multimerization domain) with polymerase L; this interaction forms the polymerase L-P complex. Interacts (via N-terminus) with N0 (via Ncore); this interaction allows P to chaperon N0 to avoid N polymerization before encapsidation. Interacts (via C-terminus) with N-RNA template; this interaction positions the polymerase on the template for both transcription and replication. Interacts with host RPS6KB1 kinase; this interaction may play a role in the viral replication and transcription.

Its subcellular location is the virion. Functionally, essential cofactor of the RNA polymerase L that plays a central role in the transcription and replication by forming the polymerase complex with RNA polymerase L and recruiting L to the genomic N-RNA template for RNA synthesis. Also plays a central role in the encapsidation of nascent RNA chains by forming the encapsidation complex with the nucleocapsid protein N (N-P complex). Acts as a chaperone for newly synthesized free N protein, so-called N0, allowing encapsidation of nascent RNA chains during replication. The nucleoprotein protein N prevents excessive phosphorylation of P, which leads to down-regulation of viral transcription/ replication. Participates, together with N, in the formation of viral factories (viroplasms), which are large inclusions in the host cytoplasm where replication takes place. This is Phosphoprotein (V/P) from Mumps orthorubulavirus (MuV).